The following is a 551-amino-acid chain: Synapse-associated protein of 47 kDa (551 aa).

Disordered regions lie at residues 20–72 and 117–198; these read AGDE…AGKR and AMPA…GQGK. Low complexity-rich tracts occupy residues 26–59, 117–128, and 137–146; these read PAPT…AAAA, AMPAMPSIPSIP, and DGAEGAEGAV. Residues S178 and S182 each carry the phosphoserine modification. Gly residues predominate over residues 182–197; sequence SGGGTPTGDEGQIGQG. T186 is subject to Phosphothreonine. One can recognise a BSD domain in the interval 295–347; it reads VDFEFSYDTAYPTAIAIMAEDKALETMRFELVPKIITEENFWRNYFYRVSLII. The tract at residues 360 to 391 is disordered; that stretch reads VGQASSGEDANEVATKEKKSKTAEPAKGDSSV. Over residues 373 to 386 the composition is skewed to basic and acidic residues; sequence ATKEKKSKTAEPAK. At S433 the chain carries Phosphoserine. The disordered stretch occupies residues 487–551; sequence KDYEVVDEGG…DLIEDTDDLK (65 aa). A compositionally biased stretch (acidic residues) spans 514–523; it reads DDTEADEDEP. Residues 524–535 are compositionally biased toward polar residues; sequence TISNLRTRSTNN. At T530 the chain carries Phosphothreonine. A compositionally biased stretch (acidic residues) spans 536-551; sequence DWEEYADLIEDTDDLK.

In terms of tissue distribution, expressed specifically in neurons and transported to synaptic terminals.

This is Synapse-associated protein of 47 kDa (Sap47) from Drosophila melanogaster (Fruit fly).